The sequence spans 687 residues: Glycine--tRNA ligase beta subunit (687 aa).

The protein belongs to the class-II aminoacyl-tRNA synthetase family. Tetramer of two alpha and two beta subunits.

It localises to the cytoplasm. It carries out the reaction tRNA(Gly) + glycine + ATP = glycyl-tRNA(Gly) + AMP + diphosphate. This is Glycine--tRNA ligase beta subunit from Neisseria gonorrhoeae (strain NCCP11945).